Reading from the N-terminus, the 238-residue chain is uncharacterized protein (238 aa).

A run of 7 helical transmembrane segments spans residues 15–37, 50–69, 79–96, 101–118, 128–150, 163–183, and 203–225; these read FGAL…VLLP, ARAG…CGTL, LPFH…LYFI, IFFN…VAVL, ILYA…FSLL, CAVL…RRLG, and FFVY…YLPF.

Its subcellular location is the cell membrane. This is an uncharacterized protein from Treponema pallidum (strain Nichols).